The sequence spans 321 residues: MLIVGAGPAGLYGAYYAGFRGMSVALMDSLPEAGGQVTAMYPEKVIYDVAGFPAIRGRELVDALVTQAAQFDPTYLLDQQAAELAHEPDAVVVTSSQGHRVRARVVVITGGLGTFTPRPLPTGTGHLGRGLVYFVPKLDVYADQDVIVVGGGDSAFDWALALEPIARSVTLVHRRDRFRAHAATIERVEASRVEILTFSEVAAIHGEDRIEKVELVQTRTGDRHVRPAQAVVAALGFTADLGPLTRWGLTMARRHIAVDSTMFTGVDRVFAAGDITEYPGKVRLIATGFGEVATAVNNAAPVVDPAAKVFPGHSSGDSTAS.

FAD is bound by residues aspartate 28, glutamine 36, tyrosine 41, alanine 81, phenylalanine 115, aspartate 274, and serine 315.

Belongs to the ferredoxin--NADP reductase type 2 family. As to quaternary structure, homodimer. FAD serves as cofactor.

The enzyme catalyses 2 reduced [2Fe-2S]-[ferredoxin] + NADP(+) + H(+) = 2 oxidized [2Fe-2S]-[ferredoxin] + NADPH. In Frankia alni (strain DSM 45986 / CECT 9034 / ACN14a), this protein is Ferredoxin--NADP reductase.